A 411-amino-acid polypeptide reads, in one-letter code: RNA binding protein fox-1 homolog 2 (411 aa).

Residues 16-175 (TRGTKRESDQ…SETKASPKRL (160 aa)) form a disordered region. 2 stretches are compositionally biased toward polar residues: residues 58-83 (PVSQ…TPDT) and 99-119 (NGLS…QSTE). A compositionally biased stretch (low complexity) spans 135–165 (SAPATSTANASSTTDGSQTEGQQSQSQNNEN). The RRM domain occupies 173–249 (KRLHVSNIPF…RKIEVNNATA (77 aa)).

As to quaternary structure, interacts with papd4/gld2.

It is found in the nucleus. The protein resides in the cytoplasm. In terms of biological role, RNA-binding protein that regulates alternative splicing events by binding to 5'-UGCAUGU-3' elements. Regulates alternative splicing of tissue-specific exons. This chain is RNA binding protein fox-1 homolog 2 (rbfox2), found in Xenopus laevis (African clawed frog).